Reading from the N-terminus, the 632-residue chain is Fem-3 mRNA-binding factor 2 (632 aa).

Residues 1-11 show a composition bias toward basic residues; that stretch reads MDQSKMRRTNQ. Residues 1 to 37 are disordered; that stretch reads MDQSKMRRTNQFRKTSQKPPSTGIDSYPTPAQSPMAQ. Residues 12-35 are compositionally biased toward polar residues; it reads FRKTSQKPPSTGIDSYPTPAQSPM. The PUM-HD domain occupies 162–566; that stretch reads TRSNNVLPTW…KMIETLANLR (405 aa). Pumilio repeat units lie at residues 187–225, 226–264, 271–307, 308–332, 345–384, 400–436, 438–473, and 484–521; these read EVLD…QLFE, QVIG…GYTK, NFIS…KLVQ, ALPR…QKVV, DFVA…DLTS, SVTN…CIIE, CLMR…EMMD, and DTGK…RQTK. Residues 609–632 are disordered; it reads MLEPRSNKSSVSVKFSSSGSHGDD. Residues 615 to 632 are compositionally biased toward low complexity; sequence NKSSVSVKFSSSGSHGDD.

In terms of assembly, interacts (via C-terminus) with gld-3 isoform A in an RNA-independent manner. Interacts with dlc-1, and is required for the localization of fbf-2 to P granules. Interacts (via RNA-binding domain) with lst-1, probably displaces bound auto-inhibitory C-terminal tail and alters its RNA-binding affinity. Expressed specifically in the germline (at protein level).

It is found in the cytoplasm. It localises to the cytoplasmic granule. RNA-binding protein that binds to the consensus sequence 5'-UGUGCCAUA-3' in mRNA 3'-UTRs. Involved in the control of stem cells and sex determination in the C.elegans hermaphrodite germline. May also play a role in the hermaphrodite germline proliferation and oogenesis. By binding to the 3'-UTR, represses phosphatase lip-1 expression in the distal part of the germline mitotic zone. Binds specifically to the regulatory region of fem-3 3'-UTR and mediates the sperm/oocyte switch. Negatively regulates gld-3 expression possibly by directly binding to two sites within the gld-3 isoform b 3'-UTR. Suppresses germline tumor formation by preventing the dedifferentiation of secondary spermatocytes. C-terminal disordered region probably auto-inhibits RNA binding; auto-inhibition may be reversed by interaction with lst-1. The sequence is that of Fem-3 mRNA-binding factor 2 from Caenorhabditis elegans.